The primary structure comprises 1284 residues: Neuronal cell adhesion molecule (1284 aa).

Positions Met1 to Ala24 are cleaved as a signal peptide. Topologically, residues Leu25–Gln1143 are extracellular. 6 consecutive Ig-like C2-type domains span residues Pro41–Ser129, Pro136–Ser230, Pro243–Thr332, Pro337–Asn424, Pro430–Glu517, and Pro521–Thr608. 2 disulfides stabilise this stretch: Cys63–Cys118 and Cys162–Cys213. N-linked (GlcNAc...) asparagine glycosylation occurs at Asn78. Asn218 and Asn290 each carry an N-linked (GlcNAc...) asparagine glycan. Intrachain disulfides connect Cys268-Cys316 and Cys358-Cys408. Residues Asn409, Asn483, Asn576, Asn581, Asn595, and Asn692 are each glycosylated (N-linked (GlcNAc...) asparagine). 2 disulfides stabilise this stretch: Cys452–Cys501 and Cys543–Cys592. Fibronectin type-III domains lie at Pro625–Ala720, Asn725–Asp819, Ala824–Gly926, Pro930–Glu1026, and Gln1040–Ala1132. Over residues Gln707–Gly731 the composition is skewed to polar residues. Residues Gln707–Ile732 form a disordered region. N-linked (GlcNAc...) asparagine glycans are attached at residues Asn778, Asn834, Asn885, Asn969, Asn985, Asn995, Asn1048, Asn1059, and Asn1091. The chain crosses the membrane as a helical span at residues Gly1144–Ile1166. The Cytoplasmic portion of the chain corresponds to Arg1167 to Val1284. 3 stretches are compositionally biased toward basic and acidic residues: residues Pro1175–Asp1195, Arg1202–Lys1212, and Pro1221–Asp1230. The segment at Pro1175–Val1284 is disordered. The span at Asn1268–Val1284 shows a compositional bias: polar residues.

It belongs to the immunoglobulin superfamily. L1/neurofascin/NgCAM family. As to quaternary structure, heterodimer of an alpha and a beta chain. In terms of tissue distribution, retina and developing brain.

The protein resides in the cell membrane. Functionally, this protein is a cell adhesion molecule involved in neuron-neuron adhesion, neurite fasciculation, outgrowth of neurites, etc. Specifically involved in the development of optic fibres in the retina. This chain is Neuronal cell adhesion molecule, found in Gallus gallus (Chicken).